The primary structure comprises 426 residues: Enolase (426 aa).

Gln-163 contributes to the (2R)-2-phosphoglycerate binding site. Catalysis depends on Glu-205, which acts as the Proton donor. Positions 242, 285, and 312 each coordinate Mg(2+). 4 residues coordinate (2R)-2-phosphoglycerate: Lys-337, Arg-366, Ser-367, and Lys-388. Lys-337 functions as the Proton acceptor in the catalytic mechanism.

Belongs to the enolase family. It depends on Mg(2+) as a cofactor.

The protein resides in the cytoplasm. It is found in the secreted. Its subcellular location is the cell surface. It carries out the reaction (2R)-2-phosphoglycerate = phosphoenolpyruvate + H2O. The protein operates within carbohydrate degradation; glycolysis; pyruvate from D-glyceraldehyde 3-phosphate: step 4/5. Functionally, catalyzes the reversible conversion of 2-phosphoglycerate (2-PG) into phosphoenolpyruvate (PEP). It is essential for the degradation of carbohydrates via glycolysis. The chain is Enolase from Rhodospirillum centenum (strain ATCC 51521 / SW).